Consider the following 354-residue polypeptide: Gibberellin receptor GID1 (354 aa).

Positions 120 to 122 (HGG) match the Involved in the stabilization of the negatively charged intermediate by the formation of the oxyanion hole motif. Gibberellin A3 contacts are provided by residues 122-123 (GS), Y134, S198, and D250. Gibberellin A4 contacts are provided by residues 122–123 (GS), Y134, and S198. S198 is an active-site residue. D296 is a catalytic residue. Residue G327 coordinates gibberellin A3. Residue G327 participates in gibberellin A4 binding.

It belongs to the 'GDXG' lipolytic enzyme family. In terms of assembly, interacts with the DELLA protein SLR1 in a GA-dependent manner, resulting in subsequent SLR1 degradation.

The protein localises to the nucleus. Functionally, functions as a soluble gibberellin (GA) receptor. GA is an essential hormone that regulates growth and development in plants. Binds with high affinity the biologically active GAs such as GA1, GA3 and GA4, but has low or no affinity for the biologically inactive GAs. Upon GA-binding, it interacts with the DELLA protein SLR1, a repressor of GA signaling. This leads to SLR1 degradation by the proteasome, allowing the GA signaling pathway. The protein is Gibberellin receptor GID1 of Oryza sativa subsp. japonica (Rice).